The primary structure comprises 336 residues: 4-hydroxy-3-methylbut-2-enyl diphosphate reductase (336 aa).

A [4Fe-4S] cluster-binding site is contributed by cysteine 21. Histidine 50 and histidine 86 together coordinate (2E)-4-hydroxy-3-methylbut-2-enyl diphosphate. The dimethylallyl diphosphate site is built by histidine 50 and histidine 86. Isopentenyl diphosphate is bound by residues histidine 50 and histidine 86. Cysteine 108 contacts [4Fe-4S] cluster. A (2E)-4-hydroxy-3-methylbut-2-enyl diphosphate-binding site is contributed by histidine 136. Residue histidine 136 participates in dimethylallyl diphosphate binding. Histidine 136 contributes to the isopentenyl diphosphate binding site. Glutamate 138 (proton donor) is an active-site residue. Threonine 177 provides a ligand contact to (2E)-4-hydroxy-3-methylbut-2-enyl diphosphate. Cysteine 207 serves as a coordination point for [4Fe-4S] cluster. The (2E)-4-hydroxy-3-methylbut-2-enyl diphosphate site is built by serine 235, serine 236, asparagine 237, and serine 280. Serine 235, serine 236, asparagine 237, and serine 280 together coordinate dimethylallyl diphosphate. Positions 235, 236, 237, and 280 each coordinate isopentenyl diphosphate.

Belongs to the IspH family. [4Fe-4S] cluster serves as cofactor.

It carries out the reaction isopentenyl diphosphate + 2 oxidized [2Fe-2S]-[ferredoxin] + H2O = (2E)-4-hydroxy-3-methylbut-2-enyl diphosphate + 2 reduced [2Fe-2S]-[ferredoxin] + 2 H(+). The enzyme catalyses dimethylallyl diphosphate + 2 oxidized [2Fe-2S]-[ferredoxin] + H2O = (2E)-4-hydroxy-3-methylbut-2-enyl diphosphate + 2 reduced [2Fe-2S]-[ferredoxin] + 2 H(+). It participates in isoprenoid biosynthesis; dimethylallyl diphosphate biosynthesis; dimethylallyl diphosphate from (2E)-4-hydroxy-3-methylbutenyl diphosphate: step 1/1. It functions in the pathway isoprenoid biosynthesis; isopentenyl diphosphate biosynthesis via DXP pathway; isopentenyl diphosphate from 1-deoxy-D-xylulose 5-phosphate: step 6/6. Catalyzes the conversion of 1-hydroxy-2-methyl-2-(E)-butenyl 4-diphosphate (HMBPP) into a mixture of isopentenyl diphosphate (IPP) and dimethylallyl diphosphate (DMAPP). Acts in the terminal step of the DOXP/MEP pathway for isoprenoid precursor biosynthesis. This is 4-hydroxy-3-methylbut-2-enyl diphosphate reductase from Mesorhizobium japonicum (strain LMG 29417 / CECT 9101 / MAFF 303099) (Mesorhizobium loti (strain MAFF 303099)).